Reading from the N-terminus, the 415-residue chain is Serine hydroxymethyltransferase (415 aa).

(6S)-5,6,7,8-tetrahydrofolate contacts are provided by residues Leu121 and 125 to 127 (GHL). Position 229 is an N6-(pyridoxal phosphate)lysine (Lys229). 352–354 (SPF) contacts (6S)-5,6,7,8-tetrahydrofolate.

It belongs to the SHMT family. Homodimer. The cofactor is pyridoxal 5'-phosphate.

It localises to the cytoplasm. The catalysed reaction is (6R)-5,10-methylene-5,6,7,8-tetrahydrofolate + glycine + H2O = (6S)-5,6,7,8-tetrahydrofolate + L-serine. It participates in one-carbon metabolism; tetrahydrofolate interconversion. It functions in the pathway amino-acid biosynthesis; glycine biosynthesis; glycine from L-serine: step 1/1. Functionally, catalyzes the reversible interconversion of serine and glycine with tetrahydrofolate (THF) serving as the one-carbon carrier. This reaction serves as the major source of one-carbon groups required for the biosynthesis of purines, thymidylate, methionine, and other important biomolecules. Also exhibits THF-independent aldolase activity toward beta-hydroxyamino acids, producing glycine and aldehydes, via a retro-aldol mechanism. This chain is Serine hydroxymethyltransferase, found in Methylobacillus flagellatus (strain ATCC 51484 / DSM 6875 / VKM B-1610 / KT).